The following is a 450-amino-acid chain: Tubulin beta chain (450 aa).

Glutamate 69, serine 138, glycine 142, threonine 143, glycine 144, asparagine 204, and asparagine 226 together coordinate GTP. Residue glutamate 69 coordinates Mg(2+). The segment at aspartate 427 to glutamine 450 is disordered. The span at isoleucine 430–glutamine 450 shows a compositional bias: acidic residues.

It belongs to the tubulin family. In terms of assembly, dimer of alpha and beta chains. A typical microtubule is a hollow water-filled tube with an outer diameter of 25 nm and an inner diameter of 15 nM. Alpha-beta heterodimers associate head-to-tail to form protofilaments running lengthwise along the microtubule wall with the beta-tubulin subunit facing the microtubule plus end conferring a structural polarity. Microtubules usually have 13 protofilaments but different protofilament numbers can be found in some organisms and specialized cells. Mg(2+) is required as a cofactor.

It localises to the cytoplasm. Its subcellular location is the cytoskeleton. Tubulin is the major constituent of microtubules, a cylinder consisting of laterally associated linear protofilaments composed of alpha- and beta-tubulin heterodimers. Microtubules grow by the addition of GTP-tubulin dimers to the microtubule end, where a stabilizing cap forms. Below the cap, tubulin dimers are in GDP-bound state, owing to GTPase activity of alpha-tubulin. The polypeptide is Tubulin beta chain (Bombyx mori (Silk moth)).